The sequence spans 1241 residues: ATP-dependent helicase/nuclease subunit A (1241 aa).

Positions 12-485 constitute a UvrD-like helicase ATP-binding domain; sequence SQWTDDQWKA…IDLAKNFRSR (474 aa). 33–40 contributes to the ATP binding site; sequence AAAGSGKT. One can recognise a UvrD-like helicase C-terminal domain in the interval 505–805; the sequence is GEIDYDADAE…RIMTIHKSKG (301 aa).

The protein belongs to the helicase family. AddA subfamily. Heterodimer of AddA and AddB/RexB. Mg(2+) is required as a cofactor.

It catalyses the reaction Couples ATP hydrolysis with the unwinding of duplex DNA by translocating in the 3'-5' direction.. The enzyme catalyses ATP + H2O = ADP + phosphate + H(+). Functionally, the heterodimer acts as both an ATP-dependent DNA helicase and an ATP-dependent, dual-direction single-stranded exonuclease. Recognizes the chi site generating a DNA molecule suitable for the initiation of homologous recombination. The AddA nuclease domain is required for chi fragment generation; this subunit has the helicase and 3' -&gt; 5' nuclease activities. In Bacillus cereus (strain G9842), this protein is ATP-dependent helicase/nuclease subunit A.